A 93-amino-acid polypeptide reads, in one-letter code: DNA-binding protein Fis (93 aa).

The H-T-H motif DNA-binding region spans 74 to 93 (QTRAALMMGINRGTLRKKLK).

This sequence belongs to the transcriptional regulatory Fis family. Homodimer.

Functionally, activates ribosomal RNA transcription. Plays a direct role in upstream activation of rRNA promoters. The protein is DNA-binding protein Fis of Klebsiella pneumoniae.